The following is a 191-amino-acid chain: ATP synthase subunit b (191 aa).

A helical membrane pass occupies residues 10 to 30 (FLVPGPTAIAELIVFLLILFI). Residues 170–191 (RAQRQPAASDVVGGQQREEVHR) form a disordered region.

The protein belongs to the ATPase B chain family. In terms of assembly, F-type ATPases have 2 components, F(1) - the catalytic core - and F(0) - the membrane proton channel. F(1) has five subunits: alpha(3), beta(3), gamma(1), delta(1), epsilon(1). F(0) has three main subunits: a(1), b(2) and c(10-14). The alpha and beta chains form an alternating ring which encloses part of the gamma chain. F(1) is attached to F(0) by a central stalk formed by the gamma and epsilon chains, while a peripheral stalk is formed by the delta and b chains.

Its subcellular location is the cell membrane. In terms of biological role, f(1)F(0) ATP synthase produces ATP from ADP in the presence of a proton or sodium gradient. F-type ATPases consist of two structural domains, F(1) containing the extramembraneous catalytic core and F(0) containing the membrane proton channel, linked together by a central stalk and a peripheral stalk. During catalysis, ATP synthesis in the catalytic domain of F(1) is coupled via a rotary mechanism of the central stalk subunits to proton translocation. Its function is as follows. Component of the F(0) channel, it forms part of the peripheral stalk, linking F(1) to F(0). This chain is ATP synthase subunit b, found in Acidothermus cellulolyticus (strain ATCC 43068 / DSM 8971 / 11B).